The primary structure comprises 422 residues: Elongation factor 1-gamma (422 aa).

The region spanning 1–82 is the GST N-terminal domain; the sequence is MALVLHAGKT…YVARLKADNP (82 aa). Residues 87-215 enclose the GST C-terminal domain; it reads SLIDYAHIEQ…VKQTESVPPV (129 aa). The tract at residues 210–269 is disordered; the sequence is ESVPPVPSAKKPSQPKETKSKAKEEPKKEAKKEPAKPKAEAAEEVEEAPKPKPKNPLDLL. The segment covering 223–250 has biased composition (basic and acidic residues); sequence QPKETKSKAKEEPKKEAKKEPAKPKAEA. The EF-1-gamma C-terminal domain maps to 262 to 422; it reads PKNPLDLLPP…EALLDAKCFK (161 aa).

In terms of assembly, EF-1 is composed of four subunits: alpha, beta, delta, and gamma.

Probably plays a role in anchoring the complex to other cellular components. In Prunus avium (Cherry), this protein is Elongation factor 1-gamma.